We begin with the raw amino-acid sequence, 470 residues long: Uronate isomerase (470 aa).

It belongs to the metallo-dependent hydrolases superfamily. Uronate isomerase family.

It catalyses the reaction D-glucuronate = D-fructuronate. It carries out the reaction aldehydo-D-galacturonate = keto-D-tagaturonate. The protein operates within carbohydrate metabolism; pentose and glucuronate interconversion. The polypeptide is Uronate isomerase (Shigella boydii serotype 18 (strain CDC 3083-94 / BS512)).